The primary structure comprises 280 residues: tRNase Z TRZ1 (280 aa).

The protein belongs to the RNase Z family. In terms of assembly, homodimer. It depends on Zn(2+) as a cofactor. The cofactor is Ca(2+). Mn(2+) is required as a cofactor. Requires Mg(2+) as cofactor.

It localises to the cytoplasm. The catalysed reaction is Endonucleolytic cleavage of RNA, removing extra 3' nucleotides from tRNA precursor, generating 3' termini of tRNAs. A 3'-hydroxy group is left at the tRNA terminus and a 5'-phosphoryl group is left at the trailer molecule.. In terms of biological role, zinc phosphodiesterase, which displays tRNA 3'-processing endonuclease activity. Involved in tRNA maturation, by removing a 3'-trailer from precursor tRNA. Can use bis-(p-nitophenyl) phosphate (bpNPP) as substrate. Involved in the processing of small nucleolar RNAs (snoRNAs). This is tRNase Z TRZ1 from Arabidopsis thaliana (Mouse-ear cress).